The following is a 308-amino-acid chain: MQLEFLGTGAGSPGKFRNVTSVALKLLDESNEVWLFDCGEATQHQILKTNIKPRKIDKIFITHLHGDHIFGLPGFLSSRSNQGGSEELTIFGPTGIKDFVMTSLRISESKLSYRIKFVEIAQEGVLFEDQNYIVNVAELDHRIKSYGFRVKEKDHPGELLVDKLKELAIPSGPIYGQIKQGKEVTLDDGRVINGQDFIGKPQPGRVVTVLGDTRQTPNIELLAKDADALVHESTFGKQEGSLARNYYHSTNIQAAKIAKQANARQLLLTHISARYTGKLSKQLESDAKEIFSNSKVVRDFDIIDIPLP.

Residues H63, H65, D67, H68, H141, D212, and H270 each contribute to the Zn(2+) site. The active-site Proton acceptor is the D67.

It belongs to the RNase Z family. Homodimer. Zn(2+) is required as a cofactor.

The enzyme catalyses Endonucleolytic cleavage of RNA, removing extra 3' nucleotides from tRNA precursor, generating 3' termini of tRNAs. A 3'-hydroxy group is left at the tRNA terminus and a 5'-phosphoryl group is left at the trailer molecule.. Zinc phosphodiesterase, which displays some tRNA 3'-processing endonuclease activity. Probably involved in tRNA maturation, by removing a 3'-trailer from precursor tRNA. The chain is Ribonuclease Z from Pediococcus pentosaceus (strain ATCC 25745 / CCUG 21536 / LMG 10740 / 183-1w).